Consider the following 146-residue polypeptide: Anti-sigma F factor (146 aa).

This sequence belongs to the anti-sigma-factor family.

The catalysed reaction is L-seryl-[protein] + ATP = O-phospho-L-seryl-[protein] + ADP + H(+). It catalyses the reaction L-threonyl-[protein] + ATP = O-phospho-L-threonyl-[protein] + ADP + H(+). Functionally, binds to sigma F and blocks its ability to form an RNA polymerase holoenzyme (E-sigma F). Phosphorylates SpoIIAA on a serine residue. This phosphorylation may enable SpoIIAA to act as an anti-anti-sigma factor that counteracts SpoIIAB and thus releases sigma F from inhibition. The sequence is that of Anti-sigma F factor from Geobacillus sp. (strain WCH70).